A 142-amino-acid polypeptide reads, in one-letter code: DNA-directed RNA polymerases I, II, and III subunit rpabc3 (142 aa).

Residues 16 to 40 (DPDGKKFDRVSRFVCYSENYEMDLQ) are non-specific ssDNA binding.

The protein belongs to the eukaryotic RPB8 RNA polymerase subunit family. Component of the RNA polymerase I (Pol I), RNA polymerase II (Pol II) and RNA polymerase III (Pol III) complexes consisting of at least 13, 12 and 17 subunits, respectively. Directly interacts with POLR2A.

Its subcellular location is the nucleus. The protein resides in the nucleolus. Its function is as follows. DNA-dependent RNA polymerase catalyzes the transcription of DNA into RNA using the four ribonucleoside triphosphates as substrates. Common component of RNA polymerases I, II and III which synthesize ribosomal RNA precursors, mRNA precursors and many functional non-coding RNAs, and small RNAs, such as 5S rRNA and tRNAs, respectively. The protein is DNA-directed RNA polymerases I, II, and III subunit rpabc3 (polr2h) of Dictyostelium discoideum (Social amoeba).